The following is a 249-amino-acid chain: MWVGVISLFPEMFRSVTDFGVTSQAIKKGLLSIETWNPRDFTHDKHRTVDDRPYGGGPGMLMMVQPLRDAITAAREASPGKTKVIYLSPQGRTLNQAGVEELATNENLILICGRYEGVDERIIQSEVDEEWSIGDFVLTGGELPAMTLIDSVSRFVPGVLGDFASAEEDSFADGLLDCPHYTRPEVLDGKEVPSVLKSGNHKDIARWRMKQSLGRTWLRRPELLGNLALTDEQELLLAEFVREERQNSK.

S-adenosyl-L-methionine is bound by residues glycine 113 and 133–138 (IGDFVL).

The protein belongs to the RNA methyltransferase TrmD family. Homodimer.

The protein localises to the cytoplasm. The catalysed reaction is guanosine(37) in tRNA + S-adenosyl-L-methionine = N(1)-methylguanosine(37) in tRNA + S-adenosyl-L-homocysteine + H(+). Functionally, specifically methylates guanosine-37 in various tRNAs. The sequence is that of tRNA (guanine-N(1)-)-methyltransferase from Aliivibrio fischeri (strain ATCC 700601 / ES114) (Vibrio fischeri).